A 220-amino-acid chain; its full sequence is Large ribosomal subunit protein uL16 (220 aa).

Belongs to the universal ribosomal protein uL16 family. In terms of assembly, component of the large ribosomal subunit. Mature ribosomes consist of a small (40S) and a large (60S) subunit. The 40S subunit contains about 32 different proteins and 1 molecule of RNA (18S). The 60S subunit contains 45 different proteins and 3 molecules of RNA (25S, 5.8S and 5S).

Its subcellular location is the cytoplasm. Component of the ribosome, a large ribonucleoprotein complex responsible for the synthesis of proteins in the cell. The small ribosomal subunit (SSU) binds messenger RNAs (mRNAs) and translates the encoded message by selecting cognate aminoacyl-transfer RNA (tRNA) molecules. The large subunit (LSU) contains the ribosomal catalytic site termed the peptidyl transferase center (PTC), which catalyzes the formation of peptide bonds, thereby polymerizing the amino acids delivered by tRNAs into a polypeptide chain. The nascent polypeptides leave the ribosome through a tunnel in the LSU and interact with protein factors that function in enzymatic processing, targeting, and the membrane insertion of nascent chains at the exit of the ribosomal tunnel. The protein is Large ribosomal subunit protein uL16 of Candida albicans (strain SC5314 / ATCC MYA-2876) (Yeast).